Consider the following 141-residue polypeptide: VLSGPDKTNVKNVFAKIGGHADAYGAETLERMFTTYPQTKTYFPHFDLHHGSAQIKTHGKKVVSALIDAANNIDDIYGALSKLSDLHAQKLRVDPVNFKLLGQCFLVVVAIHHPSLLTPEVHASLDKFLCAVGAVLTAKYR.

The 141-residue stretch at 1–141 (VLSGPDKTNV…VGAVLTAKYR (141 aa)) folds into the Globin domain. Residue histidine 58 participates in O2 binding. Histidine 87 is a heme b binding site.

The protein belongs to the globin family. As to quaternary structure, heterotetramer of two alpha chains and two beta chains. Red blood cells.

In terms of biological role, involved in oxygen transport from the lung to the various peripheral tissues. This is Hemoglobin subunit alpha-A (HBAA) from Rhea americana (Greater rhea).